The primary structure comprises 353 residues: UPF0421 protein YgaE (353 aa).

4 consecutive transmembrane segments (helical) span residues 20–40, 67–87, 103–123, and 125–145; these read LASW…IFAI, VFGL…VIVI, LVTV…FALI, and TSTV…FLPP.

This sequence belongs to the UPF0421 family.

Its subcellular location is the cell membrane. This Bacillus subtilis (strain 168) protein is UPF0421 protein YgaE (ygaE).